We begin with the raw amino-acid sequence, 352 residues long: Protein-glutamate methylesterase/protein-glutamine glutaminase (352 aa).

Residues 5 to 123 (RILIVDDSVI…SKEKAIEYIR (119 aa)) form the Response regulatory domain. Residue aspartate 56 is modified to 4-aspartylphosphate. In terms of domain architecture, CheB-type methylesterase spans 166–352 (EIVAIGVSTG…LAEEIIRRIG (187 aa)). Catalysis depends on residues serine 173, histidine 200, and aspartate 296.

It belongs to the CheB family. Post-translationally, phosphorylated by CheA. Phosphorylation of the N-terminal regulatory domain activates the methylesterase activity.

It is found in the cytoplasm. It carries out the reaction [protein]-L-glutamate 5-O-methyl ester + H2O = L-glutamyl-[protein] + methanol + H(+). The enzyme catalyses L-glutaminyl-[protein] + H2O = L-glutamyl-[protein] + NH4(+). Its function is as follows. Involved in chemotaxis. Part of a chemotaxis signal transduction system that modulates chemotaxis in response to various stimuli. Catalyzes the demethylation of specific methylglutamate residues introduced into the chemoreceptors (methyl-accepting chemotaxis proteins or MCP) by CheR. Also mediates the irreversible deamidation of specific glutamine residues to glutamic acid. This Trichodesmium erythraeum (strain IMS101) protein is Protein-glutamate methylesterase/protein-glutamine glutaminase.